We begin with the raw amino-acid sequence, 419 residues long: Adenylosuccinate synthetase 1 (419 aa).

11–17 (GDEGKGK) contacts GTP. The active-site Proton acceptor is the aspartate 12. Mg(2+) is bound by residues aspartate 12 and glycine 39. IMP is bound by residues 12–15 (DEGK), 37–40 (NAGH), arginine 138, glutamine 220, and arginine 298. Histidine 40 (proton donor) is an active-site residue. 294–300 (TVSKRPR) contacts substrate. GTP-binding positions include arginine 300, 326-328 (NVD), and 407-409 (SYG).

The protein belongs to the adenylosuccinate synthetase family. In terms of assembly, homodimer. The cofactor is Mg(2+).

Its subcellular location is the cytoplasm. It catalyses the reaction IMP + L-aspartate + GTP = N(6)-(1,2-dicarboxyethyl)-AMP + GDP + phosphate + 2 H(+). It functions in the pathway purine metabolism; AMP biosynthesis via de novo pathway; AMP from IMP: step 1/2. Its function is as follows. Plays an important role in the de novo pathway of purine nucleotide biosynthesis. Catalyzes the first committed step in the biosynthesis of AMP from IMP. This chain is Adenylosuccinate synthetase 1, found in Photorhabdus laumondii subsp. laumondii (strain DSM 15139 / CIP 105565 / TT01) (Photorhabdus luminescens subsp. laumondii).